Consider the following 96-residue polypeptide: Co-chaperonin GroES (96 aa).

Belongs to the GroES chaperonin family. In terms of assembly, heptamer of 7 subunits arranged in a ring. Interacts with the chaperonin GroEL.

The protein localises to the cytoplasm. Functionally, together with the chaperonin GroEL, plays an essential role in assisting protein folding. The GroEL-GroES system forms a nano-cage that allows encapsulation of the non-native substrate proteins and provides a physical environment optimized to promote and accelerate protein folding. GroES binds to the apical surface of the GroEL ring, thereby capping the opening of the GroEL channel. This is Co-chaperonin GroES from Syntrophomonas wolfei subsp. wolfei (strain DSM 2245B / Goettingen).